The chain runs to 436 residues: Putative actin-fragmin kinase DDB_G0268748 (436 aa).

A disordered region spans residues 14 to 58 (DKNIDSGSSSSNIGGSSSNSSGTTNKRSSGNFNGSSASSSPSSST). Residues 18-57 (DSGSSSSNIGGSSSNSSGTTNKRSSGNFNGSSASSSPSSS) show a composition bias toward low complexity.

The protein belongs to the protein kinase superfamily. AFK Ser/Thr protein kinase family.

The protein is Putative actin-fragmin kinase DDB_G0268748 of Dictyostelium discoideum (Social amoeba).